The following is a 136-amino-acid chain: Nucleoside diphosphate kinase (136 aa).

6 residues coordinate ATP: lysine 10, phenylalanine 58, arginine 86, threonine 92, arginine 104, and asparagine 114. The active-site Pros-phosphohistidine intermediate is the histidine 117.

It belongs to the NDK family. As to quaternary structure, homotetramer. Requires Mg(2+) as cofactor.

Its subcellular location is the cytoplasm. It catalyses the reaction a 2'-deoxyribonucleoside 5'-diphosphate + ATP = a 2'-deoxyribonucleoside 5'-triphosphate + ADP. It carries out the reaction a ribonucleoside 5'-diphosphate + ATP = a ribonucleoside 5'-triphosphate + ADP. Major role in the synthesis of nucleoside triphosphates other than ATP. The ATP gamma phosphate is transferred to the NDP beta phosphate via a ping-pong mechanism, using a phosphorylated active-site intermediate. This chain is Nucleoside diphosphate kinase, found in Mycobacterium avium (strain 104).